The sequence spans 100 residues: Ubiquinol-cytochrome-C reductase complex subunit IX, mitochondrial (100 aa).

The transit peptide at 1-30 (MQTHVRRVALQALRPCLRAGLMAPKFPVRF) directs the protein to the mitochondrion. The helical transmembrane segment at 66-86 (LLMRLFFAFVAYVVAMKVFGA) threads the bilayer.

In terms of assembly, plants bc1 complex contains 10 subunits; 3 respiratory subunits, 2 core proteins and 5 low-molecular weight proteins.

Its subcellular location is the mitochondrion inner membrane. Its function is as follows. This is a component of the ubiquinol-cytochrome c reductase complex (complex III or cytochrome b-c1 complex), which is part of the mitochondrial respiratory chain. The protein is Ubiquinol-cytochrome-C reductase complex subunit IX, mitochondrial of Euglena gracilis.